We begin with the raw amino-acid sequence, 369 residues long: tRNA/tmRNA (uracil-C(5))-methyltransferase (369 aa).

S-adenosyl-L-methionine-binding residues include Gln-190, Tyr-218, Asn-223, Glu-239, and Asp-301. Cys-326 (nucleophile) is an active-site residue. Catalysis depends on Glu-360, which acts as the Proton acceptor.

This sequence belongs to the class I-like SAM-binding methyltransferase superfamily. RNA M5U methyltransferase family. TrmA subfamily.

The enzyme catalyses uridine(54) in tRNA + S-adenosyl-L-methionine = 5-methyluridine(54) in tRNA + S-adenosyl-L-homocysteine + H(+). It carries out the reaction uridine(341) in tmRNA + S-adenosyl-L-methionine = 5-methyluridine(341) in tmRNA + S-adenosyl-L-homocysteine + H(+). Functionally, dual-specificity methyltransferase that catalyzes the formation of 5-methyluridine at position 54 (m5U54) in all tRNAs, and that of position 341 (m5U341) in tmRNA (transfer-mRNA). This Vibrio atlanticus (strain LGP32) (Vibrio splendidus (strain Mel32)) protein is tRNA/tmRNA (uracil-C(5))-methyltransferase.